The sequence spans 558 residues: MAARQQTKHLFVTGGVASSLGKGLTASSLGNLLKARGLRVTMQKLDPYLNVDPGTMNPFQHGEVFVTDDGAETDLDIGHYERFLDTDLNGSANVTTGQIYSSVIAKERRGEYLGDTVQVIPHITNEIKDRIRGMAGRDVDVVITEIGGTVGDIESLPFLEAARQIRHEVGRDNVFFLHVSLLPYIGPSGELKTKPTQHSVAALRQVGITPDAIVCRADRPIPPNVKKKVSLMCDVDEEAVISAVDAPSIYDIPKVLHAEGLDAYVVRRLGLPFRDVDWTQWDELLRRVHDPANRVTIALVGKYVDLPDAYLSVIEALRAGGIANDAGVDVRWVASDTCETPGGAAKALQNVDGVVVPGGFGVRGIEGKLGALRYTRENGIPTLGLCLGLQCMVVEFARNVIGLAGANSTEFDPATPYPVIATMADQMEVVAGRRDMGGTMRLGSYPAILAPETLVHELYGCLEVRERHRHRYEVNNAYRQQLEAAGLVISGTSPDGQLVEFVELPRSVHPFYVATQAHPELRSRPTRPHPLFTGLIRAALLHRCPPIPLDTEPVPTAR.

Positions 1–271 (MAARQQTKHL…DAYVVRRLGL (271 aa)) are amidoligase domain. Residue S18 coordinates CTP. S18 lines the UTP pocket. ATP is bound by residues 19-24 (SLGKGL) and D76. Residues D76 and E145 each coordinate Mg(2+). CTP-binding positions include 152-154 (DIE), 192-197 (KTKPTQ), and K228. UTP contacts are provided by residues 192-197 (KTKPTQ) and K228. The 250-residue stretch at 296-545 (TIALVGKYVD…IRAALLHRCP (250 aa)) folds into the Glutamine amidotransferase type-1 domain. Position 359 (G359) interacts with L-glutamine. Catalysis depends on C386, which acts as the Nucleophile; for glutamine hydrolysis. Residues 387–390 (LGLQ), E410, and R471 contribute to the L-glutamine site. Active-site residues include H518 and E520.

Belongs to the CTP synthase family. As to quaternary structure, homotetramer.

It carries out the reaction UTP + L-glutamine + ATP + H2O = CTP + L-glutamate + ADP + phosphate + 2 H(+). The enzyme catalyses L-glutamine + H2O = L-glutamate + NH4(+). The catalysed reaction is UTP + NH4(+) + ATP = CTP + ADP + phosphate + 2 H(+). It functions in the pathway pyrimidine metabolism; CTP biosynthesis via de novo pathway; CTP from UDP: step 2/2. Allosterically activated by GTP, when glutamine is the substrate; GTP has no effect on the reaction when ammonia is the substrate. The allosteric effector GTP functions by stabilizing the protein conformation that binds the tetrahedral intermediate(s) formed during glutamine hydrolysis. Inhibited by the product CTP, via allosteric rather than competitive inhibition. Catalyzes the ATP-dependent amination of UTP to CTP with either L-glutamine or ammonia as the source of nitrogen. Regulates intracellular CTP levels through interactions with the four ribonucleotide triphosphates. The chain is CTP synthase from Acidothermus cellulolyticus (strain ATCC 43068 / DSM 8971 / 11B).